The sequence spans 173 residues: Galactose-6-phosphate isomerase subunit LacB (173 aa).

This sequence belongs to the LacAB/RpiB family. As to quaternary structure, heteromultimeric protein consisting of LacA and LacB.

It catalyses the reaction aldehydo-D-galactose 6-phosphate = keto-D-tagatose 6-phosphate. Its pathway is carbohydrate metabolism; D-galactose 6-phosphate degradation; D-tagatose 6-phosphate from D-galactose 6-phosphate: step 1/1. The polypeptide is Galactose-6-phosphate isomerase subunit LacB (Clostridium acetobutylicum (strain ATCC 824 / DSM 792 / JCM 1419 / IAM 19013 / LMG 5710 / NBRC 13948 / NRRL B-527 / VKM B-1787 / 2291 / W)).